Reading from the N-terminus, the 72-residue chain is Small proline-rich protein 2A (72 aa).

The span at 1–11 shows a compositional bias: low complexity; it reads MSYQQQQCKQP. Positions 1 to 20 are disordered; the sequence is MSYQQQQCKQPCQPPPVCPT. Tandem repeats lie at residues 21–29, 30–38, and 39–47. The 3 X 9 AA tandem repeats of P-K-C-P-[EQ]-P-C-P-P stretch occupies residues 21-47; sequence PKCPEPCPPPKCPEPCPPPKCPQPCPP. The tract at residues 42–72 is disordered; it reads PQPCPPQQCQQKYPPVTPSPPCQSKYPPKSK.

The protein belongs to the cornifin (SPRR) family. Forms five pairs of intrachain disulfide bonds. Expressed in intestine; selectively expressed in goblet cells.

Its subcellular location is the secreted. It is found in the extracellular space. The protein resides in the cytoplasmic vesicle. The protein localises to the secretory vesicle. Functionally, gut bactericidal protein that selectively kills Gram-positive bacteria by binding to negatively charged lipids on bacterial membranes, leading to bacterial membrane permeabilization and disruption. Specifically binds lipids bearing negatively charged headgroups, such as phosphatidic acid, phosphatidylserine (PS), cardiolipin (CL), and phosphatidylinositol phosphates, but not to zwitterionic or neutral lipids. Induced by type-2 cytokines in response to helminth infection and is required to protect against helminth-induced bacterial invasion of intestinal tissue. May also be involved in the development of the cornified envelope of squamous epithelia; however, additional evidences are required to confirm this result in vivo. The protein is Small proline-rich protein 2A of Homo sapiens (Human).